The following is a 590-amino-acid chain: Aspartate--tRNA(Asp/Asn) ligase (590 aa).

Glu-170 contributes to the L-aspartate binding site. The tract at residues 194 to 197 (QLFK) is aspartate. Arg-216 is an L-aspartate binding site. Residues 216–218 (RDE) and Gln-225 each bind ATP. His-448 lines the L-aspartate pocket. Residue Glu-482 coordinates ATP. Arg-489 is a binding site for L-aspartate. 534-537 (GWDR) is an ATP binding site. A disordered region spans residues 557–590 (SGGGADPLTGAPAPITPQQRRESGIDAKPKKDGE). Residues 575–590 (QRRESGIDAKPKKDGE) show a composition bias toward basic and acidic residues.

Belongs to the class-II aminoacyl-tRNA synthetase family. Type 1 subfamily. As to quaternary structure, homodimer.

Its subcellular location is the cytoplasm. It catalyses the reaction tRNA(Asx) + L-aspartate + ATP = L-aspartyl-tRNA(Asx) + AMP + diphosphate. Aspartyl-tRNA synthetase with relaxed tRNA specificity since it is able to aspartylate not only its cognate tRNA(Asp) but also tRNA(Asn). Reaction proceeds in two steps: L-aspartate is first activated by ATP to form Asp-AMP and then transferred to the acceptor end of tRNA(Asp/Asn). The protein is Aspartate--tRNA(Asp/Asn) ligase of Mycobacterium sp. (strain KMS).